The primary structure comprises 305 residues: UDP-3-O-acyl-N-acetylglucosamine deacetylase (305 aa).

Histidine 79, histidine 238, and aspartate 242 together coordinate Zn(2+). Histidine 265 functions as the Proton donor in the catalytic mechanism.

Belongs to the LpxC family. Zn(2+) serves as cofactor.

It carries out the reaction a UDP-3-O-[(3R)-3-hydroxyacyl]-N-acetyl-alpha-D-glucosamine + H2O = a UDP-3-O-[(3R)-3-hydroxyacyl]-alpha-D-glucosamine + acetate. Its pathway is glycolipid biosynthesis; lipid IV(A) biosynthesis; lipid IV(A) from (3R)-3-hydroxytetradecanoyl-[acyl-carrier-protein] and UDP-N-acetyl-alpha-D-glucosamine: step 2/6. Functionally, catalyzes the hydrolysis of UDP-3-O-myristoyl-N-acetylglucosamine to form UDP-3-O-myristoylglucosamine and acetate, the committed step in lipid A biosynthesis. This Proteus mirabilis (strain HI4320) protein is UDP-3-O-acyl-N-acetylglucosamine deacetylase.